Reading from the N-terminus, the 236-residue chain is Uridylate kinase (236 aa).

ATP is bound at residue 10 to 13; the sequence is KLSG. Glycine 52 provides a ligand contact to UMP. ATP is bound by residues glycine 53 and arginine 57. UMP is bound by residues aspartate 72 and 133-140; that span reads TGNPFFTT. ATP contacts are provided by threonine 160, tyrosine 166, and aspartate 169.

Belongs to the UMP kinase family. Homohexamer.

The protein resides in the cytoplasm. The enzyme catalyses UMP + ATP = UDP + ADP. The protein operates within pyrimidine metabolism; CTP biosynthesis via de novo pathway; UDP from UMP (UMPK route): step 1/1. Inhibited by UTP. Catalyzes the reversible phosphorylation of UMP to UDP. In Bacteroides thetaiotaomicron (strain ATCC 29148 / DSM 2079 / JCM 5827 / CCUG 10774 / NCTC 10582 / VPI-5482 / E50), this protein is Uridylate kinase.